A 96-amino-acid polypeptide reads, in one-letter code: Protein YdfX (96 aa).

This Escherichia coli (strain K12) protein is Protein YdfX (ydfX).